A 293-amino-acid chain; its full sequence is Nucleotide-binding protein OB2468 (293 aa).

14-21 (GMSGAGKT) is an ATP binding site. 65–68 (DLRG) is a binding site for GTP.

Belongs to the RapZ-like family.

Its function is as follows. Displays ATPase and GTPase activities. The polypeptide is Nucleotide-binding protein OB2468 (Oceanobacillus iheyensis (strain DSM 14371 / CIP 107618 / JCM 11309 / KCTC 3954 / HTE831)).